Here is a 118-residue protein sequence, read N- to C-terminus: Na(+)/H(+) antiporter subunit G1 (118 aa).

Transmembrane regions (helical) follow at residues 9–29 (IALI…IGIL), 41–61 (AGKA…LFFI), and 70–90 (QLIV…HLII).

Belongs to the CPA3 antiporters (TC 2.A.63) subunit G family. In terms of assembly, may form a heterooligomeric complex that consists of seven subunits: mnhA1, mnhB1, mnhC1, mnhD1, mnhE1, mnhF1 and mnhG1.

Its subcellular location is the cell membrane. Its function is as follows. Mnh complex is a Na(+)/H(+) antiporter involved in Na(+) excretion. The protein is Na(+)/H(+) antiporter subunit G1 (mnhG1) of Staphylococcus saprophyticus subsp. saprophyticus (strain ATCC 15305 / DSM 20229 / NCIMB 8711 / NCTC 7292 / S-41).